A 347-amino-acid chain; its full sequence is Peptidoglycan recognition protein 3 (347 aa).

The N-terminal stretch at Met1 to Gly26 is a signal peptide. 2 N-acetylmuramoyl-L-alanine amidase domains span residues Leu77 to Pro185 and Pro206 to Ile328. Asn120 carries an N-linked (GlcNAc...) asparagine glycan. Cystine bridges form between Cys184/Cys306, Cys200/Cys244, and Cys220/Cys226. Residues His237 and Tyr248 each coordinate peptidoglycan. The interval His270 to Asn275 is interaction with murein.

This sequence belongs to the N-acetylmuramoyl-L-alanine amidase 2 family. As to quaternary structure, monomer. Homodimer; disulfide-linked. Heterodimer with PGLYRP4; disulfide-linked. As to expression, detected in lung, spleen and stomach, and at low levels in eye, heart, thymus and testis.

The protein resides in the secreted. Its function is as follows. Pattern receptor that binds to murein peptidoglycans (PGN) of Gram-positive bacteria. Has bactericidal activity towards Gram-positive bacteria. May kill Gram-positive bacteria by interfering with peptidoglycan biosynthesis. Also binds to Gram-negative bacteria, and has bacteriostatic activity towards Gram-negative bacteria. Plays a role in innate immunity. The protein is Peptidoglycan recognition protein 3 (Pglyrp3) of Mus musculus (Mouse).